Reading from the N-terminus, the 528-residue chain is Negative elongation factor A (528 aa).

Residues 89-248 enclose the HDAg domain; sequence WVLMVADILK…TPIPPSRTLL (160 aa). The NELF-C/D-binding stretch occupies residues 125 to 188; sequence REKVGECEAS…LQKSTETAQQ (64 aa). Position 157 is a phosphothreonine (Thr-157). Residues 189–248 form an RNAPII-binding region; the sequence is LKRSAGVPFHAKGRGLLRKMDTTTPLKGIPKQAPFRSPTAPSVFSPTGNRTPIPPSRTLL. Residues 215–245 are disordered; sequence KGIPKQAPFRSPTAPSVFSPTGNRTPIPPSR. Phosphoserine is present on residues Ser-225 and Ser-233. Residues 227 to 238 show a composition bias toward polar residues; the sequence is TAPSVFSPTGNR. At Thr-277 the chain carries Phosphothreonine. Residues 320 to 341 show a composition bias toward low complexity; that stretch reads PSTSYLPSTPSVVPASSYIPSS. Residues 320-409 are disordered; that stretch reads PSTSYLPSTP…PPAVAPTTQT (90 aa). Position 363 is a phosphoserine (Ser-363).

This sequence belongs to the NELF-A family. The NELF complex is composed of NELFA, NELFB, NELFCD (isoform NELF-C or isoform NELF-D) and NELFE; NELFA and NELFCD form a stable subcomplex that binds to the N-terminus of NELFB. In vitro, the NELFA:NELFCD subcomplex binds to ssDNA and ssRNA in a sequence- and structure-dependent manner. Interacts with the RNA polymerase II complex when it is not phosphorylated by P-TEFb. Ubiquitous. Expressed in heart, brain, placenta, liver, skeletal muscle, kidney and pancreas. Expressed at lower level in adult lung. Expressed in fetal brain, lung, liver and kidney.

The protein localises to the nucleus. Its function is as follows. Essential component of the NELF complex, a complex that negatively regulates the elongation of transcription by RNA polymerase II. The NELF complex, which acts via an association with the DSIF complex and causes transcriptional pausing, is counteracted by the P-TEFb kinase complex. In terms of biological role, (Microbial infection) The NELF complex is involved in HIV-1 latency possibly involving recruitment of PCF11 to paused RNA polymerase II. The sequence is that of Negative elongation factor A (NELFA) from Homo sapiens (Human).